The sequence spans 427 residues: Glutamyl-tRNA reductase (427 aa).

Substrate is bound by residues 49–52 (TCNR), Ser-101, 106–108 (EPQ), and Gln-112. Cys-50 serves as the catalytic Nucleophile. 181 to 186 (GAGETI) contacts NADP(+). Residues 407 to 427 (FPATPGYRHPPVRPDDADPAP) form a disordered region. Residues 418–427 (VRPDDADPAP) are compositionally biased toward basic and acidic residues.

It belongs to the glutamyl-tRNA reductase family. As to quaternary structure, homodimer.

The catalysed reaction is (S)-4-amino-5-oxopentanoate + tRNA(Glu) + NADP(+) = L-glutamyl-tRNA(Glu) + NADPH + H(+). Its pathway is porphyrin-containing compound metabolism; protoporphyrin-IX biosynthesis; 5-aminolevulinate from L-glutamyl-tRNA(Glu): step 1/2. Catalyzes the NADPH-dependent reduction of glutamyl-tRNA(Glu) to glutamate 1-semialdehyde (GSA). The sequence is that of Glutamyl-tRNA reductase from Stenotrophomonas maltophilia (strain K279a).